Consider the following 301-residue polypeptide: DSC E3 ubiquitin ligase complex subunit B (301 aa).

3 helical membrane passes run 9–29 (APIT…LSIL), 52–72 (LATW…AAML), and 90–110 (TFII…LVLL). Over residues 268-284 (AAAAASGNAGSASEASG) the composition is skewed to low complexity. The segment at 268-301 (AAAAASGNAGSASEASGQRQRRREGGIMDRLRAL) is disordered. Residues 290 to 301 (REGGIMDRLRAL) are compositionally biased toward basic and acidic residues.

As to quaternary structure, component of the DSC E3 ubiquitin ligase complex composed of dscA, dscB, dscC and dscD.

Its subcellular location is the endoplasmic reticulum membrane. The catalysed reaction is S-ubiquitinyl-[E2 ubiquitin-conjugating enzyme]-L-cysteine + [acceptor protein]-L-lysine = [E2 ubiquitin-conjugating enzyme]-L-cysteine + N(6)-ubiquitinyl-[acceptor protein]-L-lysine.. The protein operates within protein modification; protein ubiquitination. Its function is as follows. Component of the DSC E3 ubiquitin ligase complex which is required for the srbA transcriptional activator proteolytic cleavage to release the soluble transcription factor from the membrane in low oxygen or sterol conditions. Required for growth during hypoxia and triazole drug susceptibility, as well as for virulence in a murine model of invasive pulmonary aspergillosis (IPA). The sequence is that of DSC E3 ubiquitin ligase complex subunit B from Aspergillus fumigatus (strain ATCC MYA-4609 / CBS 101355 / FGSC A1100 / Af293) (Neosartorya fumigata).